A 338-amino-acid polypeptide reads, in one-letter code: Ketol-acid reductoisomerase (NADP(+)) (338 aa).

Residues 1 to 181 (MQIYYDKDAD…GGGRAGIIET (181 aa)) form the KARI N-terminal Rossmann domain. Residues 24 to 27 (YGSQ), R47, S50, S52, and 82 to 85 (DEHQ) contribute to the NADP(+) site. H107 is a catalytic residue. G133 contributes to the NADP(+) binding site. Positions 182-327 (TFREETETDL…ARLRDMMPWI (146 aa)) constitute a KARI C-terminal knotted domain. Positions 190, 194, 226, and 230 each coordinate Mg(2+). Residue S251 participates in substrate binding.

Belongs to the ketol-acid reductoisomerase family. The cofactor is Mg(2+).

The enzyme catalyses (2R)-2,3-dihydroxy-3-methylbutanoate + NADP(+) = (2S)-2-acetolactate + NADPH + H(+). The catalysed reaction is (2R,3R)-2,3-dihydroxy-3-methylpentanoate + NADP(+) = (S)-2-ethyl-2-hydroxy-3-oxobutanoate + NADPH + H(+). It functions in the pathway amino-acid biosynthesis; L-isoleucine biosynthesis; L-isoleucine from 2-oxobutanoate: step 2/4. It participates in amino-acid biosynthesis; L-valine biosynthesis; L-valine from pyruvate: step 2/4. Its function is as follows. Involved in the biosynthesis of branched-chain amino acids (BCAA). Catalyzes an alkyl-migration followed by a ketol-acid reduction of (S)-2-acetolactate (S2AL) to yield (R)-2,3-dihydroxy-isovalerate. In the isomerase reaction, S2AL is rearranged via a Mg-dependent methyl migration to produce 3-hydroxy-3-methyl-2-ketobutyrate (HMKB). In the reductase reaction, this 2-ketoacid undergoes a metal-dependent reduction by NADPH to yield (R)-2,3-dihydroxy-isovalerate. The polypeptide is Ketol-acid reductoisomerase (NADP(+)) (Methylococcus capsulatus (strain ATCC 33009 / NCIMB 11132 / Bath)).